Reading from the N-terminus, the 214-residue chain is Calcineurin B homologous protein 3 (214 aa).

Residues 1–20 (MGAAHSASEEVRELEGKTGF) form a disordered region. Gly-2 is lipidated: N-myristoyl glycine. The span at 7-16 (ASEEVRELEG) shows a compositional bias: basic and acidic residues. Residues 110–145 (SRKEKLRFLFHMYDSDSDGRITLEEYRNVVEELLSG) form the EF-hand domain. Ca(2+) contacts are provided by Asp-123, Asp-125, Asp-127, Arg-129, and Glu-134.

This sequence belongs to the calcineurin regulatory subunit family. CHP subfamily. Monomer. Homodimer; disulfide-linked. Interacts with SLC9A1/NHE1; the interaction enables an optimal Na(+)/H(+) exchange activity. As to expression, expressed in mature megakaryocytes and polymorphonuclear granulocytes (at protein level). Abundantly expressed in heart. Also expressed at a lower level in adult testis and salivary gland, and in the placenta.

Its subcellular location is the nucleus. The protein localises to the cytoplasm. The protein resides in the membrane. It is found in the cell membrane. It localises to the cell projection. Its subcellular location is the lamellipodium. The protein localises to the ruffle membrane. Its function is as follows. Functions as an integral cofactor in cell pH regulation by controlling plasma membrane-type Na(+)/H(+) exchange activity. Promotes the maturation, transport, cell surface stability and exchange activity of SLC9A1/NHE1 at the plasma membrane. Promotes the induction of hematopoietic stem cell differentiation toward megakaryocytic lineage. Essential for the coupling of ERK cascade activation with the expression of ETS family genes in megakaryocytic differentiation. Also involved in granulocytic differentiation in a ERK-dependent manner. Inhibits the phosphatase activity of calcineurin. The chain is Calcineurin B homologous protein 3 (TESC) from Homo sapiens (Human).